The sequence spans 157 residues: uncharacterized protein (157 aa).

The N-acetyltransferase domain occupies 9–146; that stretch reads LLINYKTLDE…GDFYVWHPET (138 aa).

This is an uncharacterized protein from Bacillus cereus (strain AH187).